The sequence spans 397 residues: CCA-adding enzyme (397 aa).

ATP-binding residues include Gly27 and Arg30. Gly27 and Arg30 together coordinate CTP. 2 residues coordinate Mg(2+): Asp40 and Asp42. ATP contacts are provided by Arg111, Asp154, Arg157, Arg160, and Arg163. Arg111, Asp154, Arg157, Arg160, and Arg163 together coordinate CTP.

This sequence belongs to the tRNA nucleotidyltransferase/poly(A) polymerase family. Bacterial CCA-adding enzyme type 3 subfamily. Homodimer. Requires Mg(2+) as cofactor.

It carries out the reaction a tRNA precursor + 2 CTP + ATP = a tRNA with a 3' CCA end + 3 diphosphate. It catalyses the reaction a tRNA with a 3' CCA end + 2 CTP + ATP = a tRNA with a 3' CCACCA end + 3 diphosphate. Functionally, catalyzes the addition and repair of the essential 3'-terminal CCA sequence in tRNAs without using a nucleic acid template. Adds these three nucleotides in the order of C, C, and A to the tRNA nucleotide-73, using CTP and ATP as substrates and producing inorganic pyrophosphate. Has no poly(A) polymerase activity. In Bacillus subtilis (strain 168), this protein is CCA-adding enzyme.